Consider the following 830-residue polypeptide: uncharacterized protein (830 aa).

3 disordered regions span residues 1–28, 70–147, and 186–210; these read MGVQ…DSIC, RRAN…GNFA, and AASP…SKSL. Over residues 10 to 27 the composition is skewed to polar residues; that stretch reads NSKNWLRQPDQQPIQDSI. 2 stretches are compositionally biased toward low complexity: residues 100–130 and 186–199; these read QKSS…SIQS and AASP…ASTS. Residues 200–210 show a composition bias toward polar residues; sequence ENLTPTSSKSL. 10 helical membrane passes run 505–525, 529–549, 551–571, 584–604, 622–642, 659–679, 691–711, 715–735, 740–760, and 802–822; these read WLVA…VYGG, DMLI…YINP, FFLF…FLGR, FCFA…YVVF, MLYA…GSAL, IIAV…LSLL, IQMF…LHFG, ISSA…SHFI, FAVV…AQGG, and IAIG…PFFG.

It belongs to the ThrE exporter (TC 2.A.79) family.

Its subcellular location is the cell membrane. The protein resides in the cell tip. This is an uncharacterized protein from Schizosaccharomyces pombe (strain 972 / ATCC 24843) (Fission yeast).